The chain runs to 276 residues: Large ribosomal subunit protein uL2 (276 aa).

The disordered stretch occupies residues 223–276 (GSAMNPVDHPHGGGEGKAPIGHPGPLTPWGKPTLGYKTRKKNKPSDKFIVKRRK). The span at 265 to 276 (KPSDKFIVKRRK) shows a compositional bias: basic and acidic residues.

Belongs to the universal ribosomal protein uL2 family. In terms of assembly, part of the 50S ribosomal subunit. Forms a bridge to the 30S subunit in the 70S ribosome.

Its function is as follows. One of the primary rRNA binding proteins. Required for association of the 30S and 50S subunits to form the 70S ribosome, for tRNA binding and peptide bond formation. It has been suggested to have peptidyltransferase activity; this is somewhat controversial. Makes several contacts with the 16S rRNA in the 70S ribosome. In Caldicellulosiruptor saccharolyticus (strain ATCC 43494 / DSM 8903 / Tp8T 6331), this protein is Large ribosomal subunit protein uL2.